The sequence spans 226 residues: UPF0319 protein YPO1442/y2728/YP_1333 (226 aa).

Positions Met-1–Ala-20 are cleaved as a signal peptide.

It belongs to the UPF0319 family.

The sequence is that of UPF0319 protein YPO1442/y2728/YP_1333 from Yersinia pestis.